The primary structure comprises 254 residues: Geranylgeranylglyceryl phosphate synthase (254 aa).

Positions 28 and 53 each coordinate Mg(2+). Residues 172–178, 203–204, and 225–226 contribute to the sn-glycerol 1-phosphate site; these read YLEAGSG, GG, and GT.

It belongs to the GGGP/HepGP synthase family. Group II subfamily. Mg(2+) serves as cofactor.

The protein localises to the cytoplasm. The enzyme catalyses sn-glycerol 1-phosphate + (2E,6E,10E)-geranylgeranyl diphosphate = sn-3-O-(geranylgeranyl)glycerol 1-phosphate + diphosphate. It participates in membrane lipid metabolism; glycerophospholipid metabolism. In terms of biological role, prenyltransferase that catalyzes the transfer of the geranylgeranyl moiety of geranylgeranyl diphosphate (GGPP) to the C3 hydroxyl of sn-glycerol-1-phosphate (G1P). This reaction is the first ether-bond-formation step in the biosynthesis of archaeal membrane lipids. The protein is Geranylgeranylglyceryl phosphate synthase of Methanococcus vannielii (strain ATCC 35089 / DSM 1224 / JCM 13029 / OCM 148 / SB).